A 234-amino-acid chain; its full sequence is Enolase-phosphatase E1 (234 aa).

Positions 13 and 15 each coordinate Mg(2+). Residues 127-128 (SS) and Lys-164 contribute to the substrate site. Residue Asp-191 coordinates Mg(2+).

This sequence belongs to the HAD-like hydrolase superfamily. MasA/MtnC family. In terms of assembly, monomer. It depends on Mg(2+) as a cofactor.

Its subcellular location is the cytoplasm. It is found in the nucleus. It catalyses the reaction 5-methylsulfanyl-2,3-dioxopentyl phosphate + H2O = 1,2-dihydroxy-5-(methylsulfanyl)pent-1-en-3-one + phosphate. It functions in the pathway amino-acid biosynthesis; L-methionine biosynthesis via salvage pathway; L-methionine from S-methyl-5-thio-alpha-D-ribose 1-phosphate: step 3/6. Its pathway is amino-acid biosynthesis; L-methionine biosynthesis via salvage pathway; L-methionine from S-methyl-5-thio-alpha-D-ribose 1-phosphate: step 4/6. Its function is as follows. Bifunctional enzyme that catalyzes the enolization of 2,3-diketo-5-methylthiopentyl-1-phosphate (DK-MTP-1-P) into the intermediate 2-hydroxy-3-keto-5-methylthiopentenyl-1-phosphate (HK-MTPenyl-1-P), which is then dephosphorylated to form the acireductone 1,2-dihydroxy-3-keto-5-methylthiopentene (DHK-MTPene). The chain is Enolase-phosphatase E1 from Podospora anserina (strain S / ATCC MYA-4624 / DSM 980 / FGSC 10383) (Pleurage anserina).